A 199-amino-acid polypeptide reads, in one-letter code: VAMP-like protein YKT61 (199 aa).

One can recognise a Longin domain in the interval 7–133 (LVLKCAPEAS…LTEALNKFQD (127 aa)). Positions 139–199 (KLLKIQRELD…KKTNSCCTIL (61 aa)) constitute a v-SNARE coiled-coil homology domain. C195 carries the S-palmitoyl cysteine lipid modification. C196 is modified (cysteine methyl ester). Residue C196 is the site of S-geranylgeranyl cysteine attachment. The propeptide at 197–199 (TIL) is removed in mature form.

It belongs to the synaptobrevin family. As to quaternary structure, interacts with SYP41. Core constituent of the SNARE complex required for membrane fusion at the trans-Golgi network. As to expression, expressed ubiquitously in roots, stems, flowers and leaves.

It localises to the cell membrane. May be involved in the secretory pathway. Essential for membrane fusion mediated by either SYP41 or SYP61; triggers the fusion of phospholipid vesicles containing SYP41 or SYP61 and VTI12. This Arabidopsis thaliana (Mouse-ear cress) protein is VAMP-like protein YKT61.